The chain runs to 117 residues: SGSCTLKTCWKKMPTFRDVGNRLKSYFDGAVKVTGGNSGENLIPEDETVKQPTIKDLVYSMESHDFCEPDRKSGSLGTEGRRCNSTSMDVGGCDIMCCGRGYHEVLAEKRENCRCRF.

Ser-1 is lipidated: O-palmitoleoyl serine; by PORCN. A disulfide bridge links Cys-83 with Cys-98. N-linked (GlcNAc...) asparagine glycosylation is present at Asn-84.

Belongs to the Wnt family. In terms of processing, palmitoleoylation is required for efficient binding to frizzled receptors. Depalmitoleoylation leads to Wnt signaling pathway inhibition.

It is found in the secreted. Its subcellular location is the extracellular space. The protein localises to the extracellular matrix. Its function is as follows. Ligand for members of the frizzled family of seven transmembrane receptors. Probable developmental protein. May be a signaling molecule which affects the development of discrete regions of tissues. Is likely to signal over only few cell diameters. In Strongylocentrotus purpuratus (Purple sea urchin), this protein is Protein Wnt-6 (WNT-6).